The primary structure comprises 471 residues: ATP synthase subunit beta (471 aa).

153–160 is a binding site for ATP; that stretch reads GGAGVGKT.

Belongs to the ATPase alpha/beta chains family. As to quaternary structure, F-type ATPases have 2 components, CF(1) - the catalytic core - and CF(0) - the membrane proton channel. CF(1) has five subunits: alpha(3), beta(3), gamma(1), delta(1), epsilon(1). CF(0) has three main subunits: a(1), b(2) and c(9-12). The alpha and beta chains form an alternating ring which encloses part of the gamma chain. CF(1) is attached to CF(0) by a central stalk formed by the gamma and epsilon chains, while a peripheral stalk is formed by the delta and b chains.

It localises to the cell inner membrane. It carries out the reaction ATP + H2O + 4 H(+)(in) = ADP + phosphate + 5 H(+)(out). Its function is as follows. Produces ATP from ADP in the presence of a proton gradient across the membrane. The catalytic sites are hosted primarily by the beta subunits. The protein is ATP synthase subunit beta of Verminephrobacter eiseniae (strain EF01-2).